Consider the following 102-residue polypeptide: MGAIPLEHGLAVAGILFCLGLVGLMVRRNILFVLMSLEVMMNASALAFVVAGARWVQPDGQVMFILVISLAAAEASIGLAILLQLYRRFHTLDIDAASEMRG.

3 helical membrane-spanning segments follow: residues 6–26 (LEHG…GLMV), 30–50 (ILFV…AFVV), and 62–82 (VMFI…LAIL).

It belongs to the complex I subunit 4L family. As to quaternary structure, NDH-1 is composed of 13 different subunits. Subunits NuoA, H, J, K, L, M, N constitute the membrane sector of the complex.

The protein resides in the cell inner membrane. It carries out the reaction a quinone + NADH + 5 H(+)(in) = a quinol + NAD(+) + 4 H(+)(out). Functionally, NDH-1 shuttles electrons from NADH, via FMN and iron-sulfur (Fe-S) centers, to quinones in the respiratory chain. The immediate electron acceptor for the enzyme in this species is believed to be ubiquinone. Couples the redox reaction to proton translocation (for every two electrons transferred, four hydrogen ions are translocated across the cytoplasmic membrane), and thus conserves the redox energy in a proton gradient. The sequence is that of NADH-quinone oxidoreductase subunit K from Pseudomonas putida (strain ATCC 700007 / DSM 6899 / JCM 31910 / BCRC 17059 / LMG 24140 / F1).